The sequence spans 399 residues: Putative cytochrome P450 133B2 (399 aa).

Residue Cys-348 participates in heme binding.

It belongs to the cytochrome P450 family. Heme serves as cofactor.

This is Putative cytochrome P450 133B2 (cyp133B2) from Xylella fastidiosa (strain Temecula1 / ATCC 700964).